The chain runs to 595 residues: Aspartate--tRNA(Asp/Asn) ligase (595 aa).

Position 178 (Glu-178) interacts with L-aspartate. Residues 202 to 205 (QIFK) are aspartate. Residue Arg-224 coordinates L-aspartate. Residues 224–226 (RDE) and Gln-233 each bind ATP. Position 458 (His-458) interacts with L-aspartate. Glu-488 provides a ligand contact to ATP. Arg-495 provides a ligand contact to L-aspartate. ATP is bound at residue 540–543 (GIDR).

This sequence belongs to the class-II aminoacyl-tRNA synthetase family. Type 1 subfamily. Homodimer.

The protein resides in the cytoplasm. It catalyses the reaction tRNA(Asx) + L-aspartate + ATP = L-aspartyl-tRNA(Asx) + AMP + diphosphate. Aspartyl-tRNA synthetase with relaxed tRNA specificity since it is able to aspartylate not only its cognate tRNA(Asp) but also tRNA(Asn). Reaction proceeds in two steps: L-aspartate is first activated by ATP to form Asp-AMP and then transferred to the acceptor end of tRNA(Asp/Asn). The polypeptide is Aspartate--tRNA(Asp/Asn) ligase (Acaryochloris marina (strain MBIC 11017)).